We begin with the raw amino-acid sequence, 422 residues long: Beta-1,3-galactosyltransferase 2 (422 aa).

Residues 1–20 are Cytoplasmic-facing; sequence MLQWRRRHCCFAKMTWSPKR. Residues 21–43 traverse the membrane as a helical; Signal-anchor for type II membrane protein segment; it reads SLLRTPLTGVLSLVFLFAMFLFF. Residues 44–422 are Lumenal-facing; it reads NHHDWLPGRP…AGRYRHRKLH (379 aa). 5 N-linked (GlcNAc...) asparagine glycosylation sites follow: Asn-75, Asn-98, Asn-119, Asn-176, and Asn-226. Residues 91-110 form a disordered region; that stretch reads LRPHTASNSSNTELSPQGVT. Residues 95–110 show a composition bias toward polar residues; the sequence is TASNSSNTELSPQGVT.

This sequence belongs to the glycosyltransferase 31 family. The cofactor is Mn(2+). As to expression, detected in brain and heart.

It localises to the golgi apparatus membrane. It carries out the reaction an N-acetyl-beta-D-glucosaminyl derivative + UDP-alpha-D-galactose = a beta-D-galactosyl-(1-&gt;3)-N-acetyl-beta-D-glucosaminyl derivative + UDP + H(+). It catalyses the reaction a beta-D-GlcNAc-(1-&gt;3)-beta-D-Gal-(1-&gt;4)-beta-D-Glc-(1&lt;-&gt;1)-Cer(d18:1(4E)) + UDP-alpha-D-galactose = a beta-D-Gal-(1-&gt;3)-beta-D-GlcNAc-(1-&gt;3)-beta-D-Gal-(1-&gt;4)-beta-D-Glc-(1&lt;-&gt;1')-Cer(d18:1(4E)) + UDP + H(+). The catalysed reaction is a neolactoside IV(3)-beta-GlcNAc-nLc4Cer(d18:1(4E)) + UDP-alpha-D-galactose = a neolactoside IV(3)-beta-[Gal-beta-(1-&gt;3)-GlcNAc]-nLc4Cer(d18:1(4E)) + UDP + H(+). It functions in the pathway protein modification; protein glycosylation. Beta-1,3-galactosyltransferase that transfers galactose from UDP-galactose to substrates with a terminal beta-N-acetylglucosamine (beta-GlcNAc) residue. Can also utilize substrates with a terminal galactose residue, albeit with lower efficiency. Involved in the biosynthesis of the carbohydrate moieties of glycolipids and glycoproteins. This Mus musculus (Mouse) protein is Beta-1,3-galactosyltransferase 2.